Here is a 404-residue protein sequence, read N- to C-terminus: Dihydrosphingosine 1-phosphate phosphatase YSR3 (404 aa).

At 1–86 (MTIIQTVTEL…PFRDVYFKYT (86 aa)) the chain is on the lumenal side. The N-linked (GlcNAc...) asparagine glycan is linked to N62. The helical transmembrane segment at 87-107 (SLMGSHMFYVIVLPMPVWLGY) threads the bilayer. Residues 108 to 113 (RDLTRD) are Cytoplasmic-facing. The helical transmembrane segment at 114–134 (MIYVLGYSIYLSGYLKDYWCL) threads the bilayer. The tract at residues 129-137 (KDYWCLPRP) is phosphatase sequence motif I. The Lumenal portion of the chain corresponds to 135-154 (PRPKSPPVDRITLSEYTTKE). The helical transmembrane segment at 155–176 (YGAPSSHSANATAVSLLFFWRI) threads the bilayer. Residues 158–161 (PSSH) form a phosphatase sequence motif II region. Residue H161 is the Proton donor of the active site. Residues 177 to 182 (CLSDTL) are Cytoplasmic-facing. Residues 183 to 203 (VWPTKLLLLSLVIFYYLTLVF) traverse the membrane as a helical segment. Residues 204-215 (GRVYCGMHGMLD) are Lumenal-facing. Residues 204–215 (GRVYCGMHGMLD) are phosphatase sequence motif III. H211 serves as the catalytic Nucleophile. The chain crosses the membrane as a helical span at residues 216–236 (LFSGAAVGAICFFIRIWVVHA). The Cytoplasmic portion of the chain corresponds to 237 to 241 (LRNFQ). Residues 242-262 (IGEHLWFPLLSVAWGLFILFN) form a helical membrane-spanning segment. Residues 263–319 (HVRPIDECPCFEDSVAFIGVVSGLDCSDWLTERYGWNLVCSRYASCGSKVFLRPLVG) are Lumenal-facing. The chain crosses the membrane as a helical span at residues 320–340 (VASVIVWKDVISKTAVYTLLI). Over 341–379 (KLLRFHDDRSEKVHFHNETSEEEECLLYSGVSKVEIVGR) the chain is Cytoplasmic. The helical transmembrane segment at 380 to 400 (FLIYAGIPTTVFLLCPVFFTW) threads the bilayer. Over 401–404 (TNLR) the chain is Lumenal.

Belongs to the type 2 lipid phosphate phosphatase family.

The protein localises to the endoplasmic reticulum membrane. The enzyme catalyses sphinganine 1-phosphate + H2O = sphinganine + phosphate. In terms of biological role, dihydrosphingosine 1-phosphate phosphatase required for efficient ceramide synthesis from exogenous sphingoid bases. Involved in endocytosis and calcium-mediated signaling. In Saccharomyces cerevisiae (strain ATCC 204508 / S288c) (Baker's yeast), this protein is Dihydrosphingosine 1-phosphate phosphatase YSR3.